The following is a 291-amino-acid chain: 33 kDa chaperonin (291 aa).

Disulfide bonds link Cys-229–Cys-231 and Cys-262–Cys-265.

This sequence belongs to the HSP33 family. In terms of processing, under oxidizing conditions two disulfide bonds are formed involving the reactive cysteines. Under reducing conditions zinc is bound to the reactive cysteines and the protein is inactive.

It is found in the cytoplasm. In terms of biological role, redox regulated molecular chaperone. Protects both thermally unfolding and oxidatively damaged proteins from irreversible aggregation. Plays an important role in the bacterial defense system toward oxidative stress. The polypeptide is 33 kDa chaperonin (Vibrio vulnificus (strain YJ016)).